A 303-amino-acid chain; its full sequence is ADP-ribosyl cyclase/cyclic ADP-ribose hydrolase 1 (303 aa).

Residues M1 to K21 lie on the Cytoplasmic side of the membrane. The chain crosses the membrane as a helical; Signal-anchor for type II membrane protein span at residues A22–L44. Over W45 to V303 the chain is Extracellular. Disulfide bonds link C69/C85, C102/C183, and C163/C176. N103 is a glycosylation site (N-linked (GlcNAc...) asparagine). C122 is an active-site residue. The N-linked (GlcNAc...) asparagine glycan is linked to N123. The active site involves C204. N212 and N222 each carry an N-linked (GlcNAc...) asparagine glycan. Intrachain disulfides connect C257–C278 and C290–C299.

This sequence belongs to the ADP-ribosyl cyclase family. In terms of assembly, homodimer. As to expression, spleen, liver, heart, thymus, thyroid gland, ileum, colon, cerebellum, salivary gland, adrenal gland, jejunum, islets of Langerhans and osteoclasts.

The protein resides in the cell membrane. The catalysed reaction is NAD(+) = cyclic ADP-beta-D-ribose + nicotinamide + H(+). The enzyme catalyses nicotinate + NADP(+) = nicotinate-adenine dinucleotide phosphate + nicotinamide. It catalyses the reaction NAD(+) + H2O = ADP-D-ribose + nicotinamide + H(+). With respect to regulation, both NAADP and cADPR synthesis are inhibited by nicotinic acid. Its function is as follows. Synthesizes the second messengers cyclic ADP-ribose and nicotinate-adenine dinucleotide phosphate, the former a second messenger for glucose-induced insulin secretion, the latter a Ca(2+) mobilizer. Also has cADPR hydrolase activity. In terms of biological role, regulates osteoclastic bone resorption, probably via production of cyclic ADP-ribose and triggering of a cytosolic calcium ion signal through ryanodine receptor activation. The chain is ADP-ribosyl cyclase/cyclic ADP-ribose hydrolase 1 (Cd38) from Rattus norvegicus (Rat).